The chain runs to 792 residues: Phosphatidylinositol 4-phosphate 5-kinase type-1 sktl (792 aa).

Residues 1 to 21 (MDTRVELELEPVGKQDRLKDQ) show a composition bias toward basic and acidic residues. Disordered regions lie at residues 1–74 (MDTR…QPGT), 105–139 (TQTP…KKLG), 423–446 (AKLQ…DAPE), 577–612 (TPTF…PTNA), and 640–714 (AAST…TDLS). Composition is skewed to polar residues over residues 52–62 (QTASPDQEATP) and 105–131 (TQTP…STTG). Residues 155–573 (QSKQIMGSIQ…RFQDAMGKQV (419 aa)) enclose the PIPK domain. Low complexity predominate over residues 642–658 (STSSLQQQRSSNQSNNN). Over residues 678–702 (EPSSTYHTQYSYDSSGRTGSALTSD) the composition is skewed to polar residues.

Interacts with ash2 (via B30.2/SPRY domain); the interaction is direct and seems to be specific for ash2 isoform B.

It localises to the cytoplasm. The protein localises to the cell cortex. Its subcellular location is the nucleus. The protein resides in the chromosome. It is found in the apical cell membrane. It localises to the cell projection. The protein localises to the cilium. Its subcellular location is the flagellum membrane. The enzyme catalyses a 1,2-diacyl-sn-glycero-3-phospho-(1D-myo-inositol 4-phosphate) + ATP = a 1,2-diacyl-sn-glycero-3-phospho-(1D-myo-inositol-4,5-bisphosphate) + ADP + H(+). Its function is as follows. Catalyzes the phosphorylation of phosphatidylinositol 4-phosphate (PtdIns[4]P) to form phosphatidylinositol 4,5-bisphosphate (PtdIns[4,5]P(2)), a lipid second messenger that regulates several cellular processes such as signal transduction, vesicle trafficking, actin cytoskeleton dynamics, cell adhesion, and cell motility. PtdIns[4,5]P(2) can directly act as a second messenger or can be utilized as a precursor to generate other second messengers: inositol 1,4,5-trisphosphate (IP3), diacylglycerol (DAG) or phosphatidylinositol-3,4,5-trisphosphate (PtdIns[3,4,5]P(3)). Required for germline development during oogenesis. Sktl is the major phosphatidylinositol 4-phosphate 5-kinase responsible for enrichment of PtdIns[4,5]P(2) in the apical plasma membrane of the oocyte and follicular epithelium cells of the egg chamber during oogenesis. Involved in nuclear anchoring and microtubule organization required for targeted mRNA transport during maintenance of oocyte polarity. The PtdIns[4,5]P(2) produced by sktl is required for maintenance of cellular polarity, prevention of the epithelial-mesenchymal transition process, maintenance of adherens junctions and regulation of apical constriction, probably by affecting polarized cortical recruitment of PAR proteins and their effectors, including baz/bazooka, aPKC, par-1 and l(2)gl. Involved in actin cytoskeleton organization probably through PtdIns[4,5]P(2)-mediated regulation of Moe/Moesin phosphorylation. Involved in PtdIns[4,5]P(2)-mediated apical recruitment of the formin dia/diaphanous in tubular epithelial cells. Involved in anterodorsal cell morphogenesis and eggshell dorsal appendage formation, probably through regulation of apical constriction by PtdIns[4,5]P(2) during tubulogenesis. Required for cell viability or proliferation during wing and eye imaginal disk development. May be involved in cytoskeletal regulation during sensory bristle development. Together with mys/integrin beta localizes to the trailing edge of larval epidermal cells in a JNK signaling-dependent manner during wound healing and is required for setting up cell polarity and re-epithelialization. Required for polarization of elongating spermatid cysts possibly by generation of PtdIns[4,5]P(2) involved in mediating membrane association and orientation of the nucleus-basal body pair. Probably involved in PtdIns[4,5]P(2)-mediated recruitment of exocyst proteins that may mediate membrane addition during spermatid elongation. Involved in maintenance of specialised cell contacts known as slit diaphragms required for nephrocyte morphogenesis and function. Regulates nephrocyte endocytosis, possibly through PtdIns[4,5]P(2)-mediated recruitment of effector proteins. Not required for nervous system development or neurotransmitter release at the neuromuscular junction. Together with ash2 probably plays a role in maintenance of transcriptionally active chromatin through down-regulation of histone H1 hyperphosphorylation. The protein is Phosphatidylinositol 4-phosphate 5-kinase type-1 sktl of Drosophila melanogaster (Fruit fly).